The primary structure comprises 265 residues: 3-methyl-2-oxobutanoate hydroxymethyltransferase (265 aa).

Positions 46 and 85 each coordinate Mg(2+). Residues 46-47 (DS), Asp-85, and Lys-114 each bind 3-methyl-2-oxobutanoate. A Mg(2+)-binding site is contributed by Glu-116. The active-site Proton acceptor is the Glu-183.

It belongs to the PanB family. As to quaternary structure, homodecamer; pentamer of dimers. The cofactor is Mg(2+).

The protein resides in the cytoplasm. It carries out the reaction 3-methyl-2-oxobutanoate + (6R)-5,10-methylene-5,6,7,8-tetrahydrofolate + H2O = 2-dehydropantoate + (6S)-5,6,7,8-tetrahydrofolate. Its pathway is cofactor biosynthesis; coenzyme A biosynthesis. Catalyzes the reversible reaction in which hydroxymethyl group from 5,10-methylenetetrahydrofolate is transferred onto alpha-ketoisovalerate to form ketopantoate. The protein is 3-methyl-2-oxobutanoate hydroxymethyltransferase of Caldivirga maquilingensis (strain ATCC 700844 / DSM 13496 / JCM 10307 / IC-167).